A 655-amino-acid chain; its full sequence is p-hydroxybenzoic acid efflux pump subunit AaeB (655 aa).

Topologically, residues 1–12 (MGIFSIANQHIR) are periplasmic. A helical transmembrane segment spans residues 13–33 (FAVKLACAIVLALFIGFHFQL). The Cytoplasmic portion of the chain corresponds to 34–37 (ETPR). A helical transmembrane segment spans residues 38–58 (WAVLTAAIVAAGPAFAAGGEP). Residues 59–68 (YSGAIRYRGM) lie on the Periplasmic side of the membrane. Residues 69–89 (LRIIGTFIGCIAALIIIISMI) form a helical membrane-spanning segment. The Cytoplasmic portion of the chain corresponds to 90 to 92 (RAP). A helical transmembrane segment spans residues 93 to 113 (LLMILVCCVWVGFCTWISSLV). Residues 114 to 120 (RIENSYA) are Periplasmic-facing. The chain crosses the membrane as a helical span at residues 121-141 (WGLSGYTALIIVITIQTEPLL). Residues 142–151 (TPQFALERCS) lie on the Cytoplasmic side of the membrane. Residues 152 to 172 (EIVIGIGCAILADLLFSPRSI) form a helical membrane-spanning segment. Topologically, residues 173–369 (KQEVDRELDS…RTTLSCILGT (197 aa)) are periplasmic. Residues 370–390 (LFWLWTGWTSGNGEMVMIAVV) form a helical membrane-spanning segment. The Cytoplasmic segment spans residues 391 to 406 (TSLAMRLPNPRMVCID). A helical transmembrane segment spans residues 407 to 427 (FIYGTLAALPLGLLYFLVIIP). Topologically, residues 428–430 (NTQ) are periplasmic. A helical transmembrane segment spans residues 431–451 (QSMLLLCLSLAVLGFFIGIEV). Residues 452-458 (QKRRLGS) lie on the Cytoplasmic side of the membrane. The chain crosses the membrane as a helical span at residues 459 to 479 (MGALASTINIIVLDNPMTFHF). The Periplasmic portion of the chain corresponds to 480–481 (SQ). Residues 482-502 (FLDSALGQIVGCMLAFIVILL) form a helical membrane-spanning segment. The Cytoplasmic portion of the chain corresponds to 503 to 655 (VRDKSKDRTG…HKYQNALTDS (153 aa)).

Belongs to the aromatic acid exporter ArAE (TC 2.A.85) family.

Its subcellular location is the cell inner membrane. Functionally, forms an efflux pump with AaeA. Could function as a metabolic relief valve, allowing to eliminate certain compounds when they accumulate to high levels in the cell. This chain is p-hydroxybenzoic acid efflux pump subunit AaeB, found in Salmonella paratyphi A (strain ATCC 9150 / SARB42).